A 232-amino-acid chain; its full sequence is Phosphatidylserine decarboxylase proenzyme (232 aa).

S190 acts as the Schiff-base intermediate with substrate; via pyruvic acid in catalysis. Position 190 is a pyruvic acid (Ser); by autocatalysis (S190).

The protein belongs to the phosphatidylserine decarboxylase family. PSD-A subfamily. In terms of assembly, heterodimer of a large membrane-associated beta subunit and a small pyruvoyl-containing alpha subunit. The cofactor is pyruvate. In terms of processing, is synthesized initially as an inactive proenzyme. Formation of the active enzyme involves a self-maturation process in which the active site pyruvoyl group is generated from an internal serine residue via an autocatalytic post-translational modification. Two non-identical subunits are generated from the proenzyme in this reaction, and the pyruvate is formed at the N-terminus of the alpha chain, which is derived from the carboxyl end of the proenzyme. The post-translation cleavage follows an unusual pathway, termed non-hydrolytic serinolysis, in which the side chain hydroxyl group of the serine supplies its oxygen atom to form the C-terminus of the beta chain, while the remainder of the serine residue undergoes an oxidative deamination to produce ammonia and the pyruvoyl prosthetic group on the alpha chain.

The protein localises to the cell membrane. It carries out the reaction a 1,2-diacyl-sn-glycero-3-phospho-L-serine + H(+) = a 1,2-diacyl-sn-glycero-3-phosphoethanolamine + CO2. It functions in the pathway phospholipid metabolism; phosphatidylethanolamine biosynthesis; phosphatidylethanolamine from CDP-diacylglycerol: step 2/2. Catalyzes the formation of phosphatidylethanolamine (PtdEtn) from phosphatidylserine (PtdSer). This Rhizobium etli (strain CIAT 652) protein is Phosphatidylserine decarboxylase proenzyme.